The primary structure comprises 363 residues: 3-isopropylmalate dehydrogenase (363 aa).

Residue 78-91 (GPKWEHLPPDQQPE) coordinates NAD(+). Substrate is bound by residues arginine 99, arginine 109, arginine 138, and aspartate 227. Residues aspartate 227, aspartate 251, and aspartate 255 each contribute to the Mg(2+) site. Residue 285–297 (GSAPDIAGKNIAN) coordinates NAD(+).

It belongs to the isocitrate and isopropylmalate dehydrogenases family. LeuB type 1 subfamily. In terms of assembly, homodimer. Requires Mg(2+) as cofactor. Mn(2+) serves as cofactor.

It is found in the cytoplasm. It carries out the reaction (2R,3S)-3-isopropylmalate + NAD(+) = 4-methyl-2-oxopentanoate + CO2 + NADH. Its pathway is amino-acid biosynthesis; L-leucine biosynthesis; L-leucine from 3-methyl-2-oxobutanoate: step 3/4. In terms of biological role, catalyzes the oxidation of 3-carboxy-2-hydroxy-4-methylpentanoate (3-isopropylmalate) to 3-carboxy-4-methyl-2-oxopentanoate. The product decarboxylates to 4-methyl-2 oxopentanoate. The polypeptide is 3-isopropylmalate dehydrogenase (Shigella sonnei (strain Ss046)).